Consider the following 276-residue polypeptide: 2-dehydro-3-deoxyphosphooctonate aldolase (276 aa).

The protein belongs to the KdsA family.

It localises to the cytoplasm. It carries out the reaction D-arabinose 5-phosphate + phosphoenolpyruvate + H2O = 3-deoxy-alpha-D-manno-2-octulosonate-8-phosphate + phosphate. It functions in the pathway carbohydrate biosynthesis; 3-deoxy-D-manno-octulosonate biosynthesis; 3-deoxy-D-manno-octulosonate from D-ribulose 5-phosphate: step 2/3. The protein operates within bacterial outer membrane biogenesis; lipopolysaccharide biosynthesis. This chain is 2-dehydro-3-deoxyphosphooctonate aldolase, found in Xanthomonas campestris pv. campestris (strain 8004).